Consider the following 81-residue polypeptide: 2,3-bisphosphoglycerate-independent phosphoglycerate mutase (81 aa).

The Phosphoserine intermediate role is filled by Ser-14. Residue Ser-14 participates in Mn(2+) binding. His-75 provides a ligand contact to substrate.

It belongs to the BPG-independent phosphoglycerate mutase family. As to quaternary structure, monomer. The cofactor is Mn(2+).

The enzyme catalyses (2R)-2-phosphoglycerate = (2R)-3-phosphoglycerate. It functions in the pathway carbohydrate degradation; glycolysis; pyruvate from D-glyceraldehyde 3-phosphate: step 3/5. In terms of biological role, catalyzes the interconversion of 2-phosphoglycerate and 3-phosphoglycerate. The chain is 2,3-bisphosphoglycerate-independent phosphoglycerate mutase (gpmI) from Tomato big bud phytoplasma.